Reading from the N-terminus, the 1227-residue chain is Tyrosine-protein kinase receptor ver-3 (1227 aa).

Positions 1-17 (MKLKLTVLLILVHASAS) are cleaved as a signal peptide. At 18–764 (YKPPAIEVED…VQVNNAPKGS (747 aa)) the chain is on the extracellular side. In terms of domain architecture, Ig-like C2-type 1 spans 20-110 (PPAIEVEDYQ…RESDTGTYSC (91 aa)). Cys52 and Cys110 are disulfide-bonded. 7 N-linked (GlcNAc...) asparagine glycosylation sites follow: Asn119, Asn211, Asn245, Asn255, Asn381, Asn425, and Asn528. The Ig-like C2-type 2 domain occupies 200–325 (VNFECRYKKE…EHENKETKYT (126 aa)). Cys204 and Cys313 are oxidised to a cystine. Ig-like C2-type domains follow at residues 565–666 (PHHE…TSID) and 673–758 (PSIT…VQVN). Disulfide bonds link Cys592-Cys650 and Cys696-Cys740. Asn697 carries N-linked (GlcNAc...) asparagine glycosylation. Residues 765–785 (LFFYWFLALLLLISIIAVFLL) form a helical membrane-spanning segment. Topologically, residues 786 to 1227 (TCKLRASNRL…ERYLIVESHA (442 aa)) are cytoplasmic. Residues 847–1175 (LEILNPIGSG…HMRDSSSQFL (329 aa)) enclose the Protein kinase domain. ATP contacts are provided by residues 853–861 (IGSGHFGVV) and Lys886. Asp1030 serves as the catalytic Proton acceptor. The disordered stretch occupies residues 1194–1227 (DWIQDSRPDVPNVSFQKSPKKQKEERYLIVESHA). The segment covering 1214–1227 (KQKEERYLIVESHA) has biased composition (basic and acidic residues).

It belongs to the protein kinase superfamily. Tyr protein kinase family. In terms of tissue distribution, expressed in the ALA neuron.

The protein localises to the cell membrane. It carries out the reaction L-tyrosyl-[protein] + ATP = O-phospho-L-tyrosyl-[protein] + ADP + H(+). Receptor tyrosine kinase which may be involved, downstream of pvf-1, in the positioning of ray 1, the most anterior ray sensillum in the male tail. This is Tyrosine-protein kinase receptor ver-3 from Caenorhabditis elegans.